The sequence spans 499 residues: Gamma-aminobutyric acid receptor subunit beta (499 aa).

Positions 1 to 23 (MWGIIVPFFSASLMCSLVAVVRC) are cleaved as a signal peptide. At 24–251 (QQDTDHFANV…IFQLQRNIGY (228 aa)) the chain is on the extracellular side. N-linked (GlcNAc...) asparagine glycosylation is found at Asn-32, Asn-98, Asn-106, and Asn-152. Cys-167 and Cys-181 are joined by a disulfide. 3 helical membrane-spanning segments follow: residues 252–273 (FIFQ…SFWI), 278–299 (TSAR…SNGV), and 311–333 (AIDI…YAAV). The Cytoplasmic portion of the chain corresponds to 334–475 (NYTYWGARAK…RVQDVNTIDK (142 aa)). Residues 476–499 (YARLMFPLLFIIFNTSYWSVYLLT) traverse the membrane as a helical segment.

The protein belongs to the ligand-gated ion channel (TC 1.A.9) family. Gamma-aminobutyric acid receptor (TC 1.A.9.5) subfamily. As to quaternary structure, generally pentameric. There are five types of GABA(A) receptor chains: alpha, beta, gamma, delta, and rho.

The protein resides in the postsynaptic cell membrane. The protein localises to the cell membrane. Its function is as follows. GABA, an inhibitory neurotransmitter, mediates neuronal inhibition by binding to the GABA/benzodiazepine receptor and opening an integral chloride channel. This is Gamma-aminobutyric acid receptor subunit beta from Lymnaea stagnalis (Great pond snail).